A 348-amino-acid chain; its full sequence is Mediator of RNA polymerase II transcription subunit 18 (348 aa).

Over residues 152 to 218 (MDVDLEHKDK…KNDEVKHSEV (67 aa)) the composition is skewed to basic and acidic residues. A disordered region spans residues 152 to 227 (MDVDLEHKDK…VNLEDGAETG (76 aa)). Residues 167–223 (DTKEKEEDKKEEDKKEEDKKEEDKKEEDKKEEDKKEEEKVEKKNDEVKHSEVNLEDG) are a coiled coil.

This sequence belongs to the Mediator complex subunit 18 family. In terms of assembly, component of the Mediator complex.

Its subcellular location is the nucleus. Its function is as follows. Component of the Mediator complex, a coactivator involved in the regulated transcription of nearly all RNA polymerase II-dependent genes. Mediator functions as a bridge to convey information from gene-specific regulatory proteins to the basal RNA polymerase II transcription machinery. Mediator is recruited to promoters by direct interactions with regulatory proteins and serves as a scaffold for the assembly of a functional preinitiation complex with RNA polymerase II and the general transcription factors. This is Mediator of RNA polymerase II transcription subunit 18 (SRB5) from Scheffersomyces stipitis (strain ATCC 58785 / CBS 6054 / NBRC 10063 / NRRL Y-11545) (Yeast).